Consider the following 450-residue polypeptide: UPF0210 protein CPE1497 (450 aa).

This sequence belongs to the UPF0210 family. In terms of assembly, homodimer.

In Clostridium perfringens (strain 13 / Type A), this protein is UPF0210 protein CPE1497.